The sequence spans 545 residues: Chaperonin GroEL (545 aa).

ATP contacts are provided by residues 30 to 33, Lys-51, 87 to 91, Gly-415, 479 to 481, and Asp-495; these read TLGP, DGTTT, and NAA.

This sequence belongs to the chaperonin (HSP60) family. As to quaternary structure, forms a cylinder of 14 subunits composed of two heptameric rings stacked back-to-back. Interacts with the co-chaperonin GroES.

It is found in the cytoplasm. The enzyme catalyses ATP + H2O + a folded polypeptide = ADP + phosphate + an unfolded polypeptide.. In terms of biological role, together with its co-chaperonin GroES, plays an essential role in assisting protein folding. The GroEL-GroES system forms a nano-cage that allows encapsulation of the non-native substrate proteins and provides a physical environment optimized to promote and accelerate protein folding. The sequence is that of Chaperonin GroEL from Salmonella agona (strain SL483).